The chain runs to 702 residues: Serotransferrin-A (702 aa).

The signal sequence occupies residues 1–19 (MDLSLRVALCLSMLALCLA). Transferrin-like domains follow at residues 26–340 (VRWC…ALKE) and 353–685 (VRWC…SLNK). Intrachain disulfides connect Cys29–Cys64 and Cys39–Cys55. Fe(3+) contacts are provided by Asp79 and Tyr111. 3 disulfides stabilise this stretch: Cys134-Cys217, Cys179-Cys192, and Cys245-Cys259. Residues Thr136, Lys140, Ala142, and Gly143 each coordinate hydrogencarbonate. Tyr211 serves as a coordination point for Fe(3+). His267 contacts Fe(3+). Residues 340–349 (EGVKEDDSAA) are connecting region. Intrachain disulfides connect Cys356-Cys388 and Cys366-Cys379. 2 residues coordinate Fe(3+): Asp403 and Tyr442. Intrachain disulfides connect Cys413-Cys697, Cys431-Cys658, Cys465-Cys544, Cys489-Cys686, Cys499-Cys513, Cys510-Cys527, and Cys584-Cys598. Residues Thr467, Arg471, Ala473, and Gly474 each contribute to the hydrogencarbonate site. Tyr538 is a binding site for Fe(3+). Position 606 (His606) interacts with Fe(3+).

Belongs to the transferrin family. Monomer. Plasma.

It localises to the secreted. Transferrins are iron binding transport proteins which can bind two Fe(3+) ions in association with the binding of an anion, usually bicarbonate. It is responsible for the transport of iron from sites of absorption and heme degradation to those of storage and utilization. Serum transferrin may also have a further role in stimulating cell proliferation. In Xenopus laevis (African clawed frog), this protein is Serotransferrin-A (tf-a).